A 531-amino-acid chain; its full sequence is T-complex protein 1 subunit zeta-2 (531 aa).

Belongs to the TCP-1 chaperonin family. Component of the chaperonin-containing T-complex (TRiC), a heterooligomeric complex of about 850 to 900 kDa that forms two stacked rings, 12 to 16 nm in diameter.

The protein resides in the cytoplasm. Functionally, component of the chaperonin-containing T-complex (TRiC), a molecular chaperone complex that assists the folding of proteins upon ATP hydrolysis. The chain is T-complex protein 1 subunit zeta-2 (CCT6B) from Bos taurus (Bovine).